Here is a 144-residue protein sequence, read N- to C-terminus: Large ribosomal subunit protein uL15 (144 aa).

The tract at residues 1 to 48 (MIKLEYLQDPSPRKRRTKLLGRGPSSGHGKTSGRGHKGDGSRSGYKRR) is disordered.

It belongs to the universal ribosomal protein uL15 family. As to quaternary structure, part of the 50S ribosomal subunit.

Functionally, binds to the 23S rRNA. In Chlamydia muridarum (strain MoPn / Nigg), this protein is Large ribosomal subunit protein uL15.